A 235-amino-acid chain; its full sequence is Protein YIP4 (235 aa).

5 helical membrane-spanning segments follow: residues 89 to 109, 114 to 134, 145 to 165, 186 to 206, and 215 to 235; these read ISAN…SLFV, SLFS…ALHL, LISY…NALV, VLSL…VAAV, and IIEI…STIL.

The protein belongs to the YIP1 family. Interacts with TVP18, TVP23, YIP1 and YIP5. Interacts with SEC4, YPT1, YPT6, YPT7, YPT10, YPT11, YPT31, YPT32 and YPT52; These proteins are all Rab GTPases.

The protein resides in the golgi apparatus membrane. May be involved in proper membrane localization of Rab GTPases. This is Protein YIP4 (YIP4) from Saccharomyces cerevisiae (strain ATCC 204508 / S288c) (Baker's yeast).